Here is a 218-residue protein sequence, read N- to C-terminus: 7-cyano-7-deazaguanine synthase (218 aa).

9 to 19 (YSGGMDSFTVL) lines the ATP pocket. Residues Cys-185, Cys-193, Cys-196, and Cys-199 each contribute to the Zn(2+) site.

This sequence belongs to the QueC family. Zn(2+) serves as cofactor.

The enzyme catalyses 7-carboxy-7-deazaguanine + NH4(+) + ATP = 7-cyano-7-deazaguanine + ADP + phosphate + H2O + H(+). It functions in the pathway purine metabolism; 7-cyano-7-deazaguanine biosynthesis. Its function is as follows. Catalyzes the ATP-dependent conversion of 7-carboxy-7-deazaguanine (CDG) to 7-cyano-7-deazaguanine (preQ(0)). The sequence is that of 7-cyano-7-deazaguanine synthase from Alteromonas mediterranea (strain DSM 17117 / CIP 110805 / LMG 28347 / Deep ecotype).